Consider the following 226-residue polypeptide: Ribose-5-phosphate isomerase A (226 aa).

Substrate is bound by residues Thr29–Thr32, Asp84–Asp87, and Lys97–Gly100. Glu106 (proton acceptor) is an active-site residue. Residue Lys124 participates in substrate binding.

This sequence belongs to the ribose 5-phosphate isomerase family. In terms of assembly, homodimer.

It catalyses the reaction aldehydo-D-ribose 5-phosphate = D-ribulose 5-phosphate. The protein operates within carbohydrate degradation; pentose phosphate pathway; D-ribose 5-phosphate from D-ribulose 5-phosphate (non-oxidative stage): step 1/1. Catalyzes the reversible conversion of ribose-5-phosphate to ribulose 5-phosphate. The polypeptide is Ribose-5-phosphate isomerase A (Methanothermobacter thermautotrophicus (strain ATCC 29096 / DSM 1053 / JCM 10044 / NBRC 100330 / Delta H) (Methanobacterium thermoautotrophicum)).